The primary structure comprises 437 residues: Adenylosuccinate synthetase (437 aa).

GTP contacts are provided by residues 12–18 (GDEGKGK) and 40–42 (GHT). D13 (proton acceptor) is an active-site residue. The Mg(2+) site is built by D13 and G40. IMP-binding positions include 13–16 (DEGK), 38–41 (NAGH), T128, R142, Q223, T238, and R302. The active-site Proton donor is H41. 298 to 304 (TTTGRRR) contacts substrate. Residues R304, 330 to 332 (KLD), and 412 to 414 (SLG) contribute to the GTP site.

It belongs to the adenylosuccinate synthetase family. Homodimer. Mg(2+) serves as cofactor.

The protein localises to the cytoplasm. It carries out the reaction IMP + L-aspartate + GTP = N(6)-(1,2-dicarboxyethyl)-AMP + GDP + phosphate + 2 H(+). Its pathway is purine metabolism; AMP biosynthesis via de novo pathway; AMP from IMP: step 1/2. Its function is as follows. Plays an important role in the de novo pathway of purine nucleotide biosynthesis. Catalyzes the first committed step in the biosynthesis of AMP from IMP. The protein is Adenylosuccinate synthetase of Parasynechococcus marenigrum (strain WH8102).